An 874-amino-acid polypeptide reads, in one-letter code: Ribosome biogenesis protein ERB1 (874 aa).

Positions 1-148 (MAKKEVSASK…DAFAAADAAT (148 aa)) are disordered. Over residues 27–41 (QAVEKEEAEKEKEEG) the composition is skewed to basic and acidic residues. Residues 55–77 (PESDSDDEGAAAAEEEEEEEEQQ) are compositionally biased toward acidic residues. The span at 78 to 89 (QDVKELDLDKGE) shows a compositional bias: basic and acidic residues. Composition is skewed to acidic residues over residues 95–104 (SDAEDFDSEE) and 128–139 (PKEDGDEQDEQD). The tract at residues 312 to 429 (RFVPSKHEAK…LRLVPGYQDS (118 aa)) is required for interaction with NOP7. The segment at 429–465 (SVRERFERSLDLYLAPRLRKNKLNIDPESLIPELPSP) is required for interaction with YTM1. 2 WD repeats span residues 481-520 (GHTG…QVFK) and 529-569 (NGED…FEIE). The span at 593 to 602 (KVKGEDTKGD) shows a compositional bias: basic and acidic residues. Residues 593-640 (KVKGEDTKGDLDDDEEEEEEEEDDDDDEGQGKVKAHNSTAPAKKDVAK) form a disordered region. Residues 603–620 (LDDDEEEEEEEEDDDDDE) show a composition bias toward acidic residues. 5 WD repeats span residues 658–700 (QCRR…SQSP), 703–741 (KSKG…LLKK), 744–783 (PGVR…TPYK), 787–827 (YHEK…DLMT), and 843–874 (INQI…LWTT).

Belongs to the WD repeat BOP1/ERB1 family. Component of the NOP7 complex, composed of ERB1, NOP7 and YTM1. The complex is held together by ERB1, which interacts with NOP7 via its N-terminal domain and with YTM1 via a high-affinity interaction between the seven-bladed beta-propeller domains of the 2 proteins. The NOP7 complex associates with the 66S pre-ribosome.

It localises to the nucleus. Its subcellular location is the nucleolus. It is found in the nucleoplasm. Its function is as follows. Component of the NOP7 complex, which is required for maturation of the 25S and 5.8S ribosomal RNAs and formation of the 60S ribosome. The protein is Ribosome biogenesis protein ERB1 of Lodderomyces elongisporus (strain ATCC 11503 / CBS 2605 / JCM 1781 / NBRC 1676 / NRRL YB-4239) (Yeast).